A 261-amino-acid polypeptide reads, in one-letter code: Carbonic anhydrase 1 (261 aa).

Ala-2 is modified (N-acetylalanine). An Alpha-carbonic anhydrase domain is found at 4–261 (PDWGYDGENG…LNGRTVKASF (258 aa)). His-65 acts as the Proton donor/acceptor in catalysis. The Zn(2+) site is built by His-95, His-97, and His-120. Substrate-binding positions include Thr-200 and 200-201 (TH).

The protein belongs to the alpha-carbonic anhydrase family. Zn(2+) is required as a cofactor.

The protein resides in the cytoplasm. The catalysed reaction is hydrogencarbonate + H(+) = CO2 + H2O. The enzyme catalyses urea = cyanamide + H2O. With respect to regulation, inhibited by acetazolamide. Functionally, catalyzes the reversible hydration of carbon dioxide. Can hydrate cyanamide to urea. This Bos taurus (Bovine) protein is Carbonic anhydrase 1 (CA1).